We begin with the raw amino-acid sequence, 172 residues long: Large ribosomal subunit protein uL10 (172 aa).

Belongs to the universal ribosomal protein uL10 family. As to quaternary structure, part of the ribosomal stalk of the 50S ribosomal subunit. The N-terminus interacts with L11 and the large rRNA to form the base of the stalk. The C-terminus forms an elongated spine to which L12 dimers bind in a sequential fashion forming a multimeric L10(L12)X complex.

Functionally, forms part of the ribosomal stalk, playing a central role in the interaction of the ribosome with GTP-bound translation factors. This chain is Large ribosomal subunit protein uL10, found in Methylorubrum extorquens (strain CM4 / NCIMB 13688) (Methylobacterium extorquens).